Consider the following 926-residue polypeptide: UvrABC system protein A (926 aa).

Residue 31–38 coordinates ATP; the sequence is GPSGSGKS. The segment at 251–278 adopts a C4-type zinc-finger fold; sequence CPEHGFSIPELSARLFSFNSPYGACPSC. 2 consecutive ABC transporter domains span residues 308 to 568 and 588 to 916; these read SGYF…PSSL and PSGK…KYLR. 620–627 is a binding site for ATP; that stretch reads GVSGSGKS. Residues 719-745 form a C4-type zinc finger; it reads CEACQGEGVIKVEMHFLPPVYVTCEVC.

Belongs to the ABC transporter superfamily. UvrA family. In terms of assembly, forms a heterotetramer with UvrB during the search for lesions.

It localises to the cytoplasm. In terms of biological role, the UvrABC repair system catalyzes the recognition and processing of DNA lesions. UvrA is an ATPase and a DNA-binding protein. A damage recognition complex composed of 2 UvrA and 2 UvrB subunits scans DNA for abnormalities. When the presence of a lesion has been verified by UvrB, the UvrA molecules dissociate. The polypeptide is UvrABC system protein A (Aquifex aeolicus (strain VF5)).